The chain runs to 1093 residues: Regulatory protein SWI4 (1093 aa).

Residues 37-147 (IEIATYSETD…FQFDPNNPPP (111 aa)) form the HTH APSES-type domain. The segment at residues 71–92 (ITQVFKIAQFSKTKRTKILEKE) is a DNA-binding region (H-T-H motif). The tract at residues 138 to 210 (FQFDPNNPPP…NQPNPSPLQN (73 aa)) is disordered. Residues 152–172 (NSILRKTSPGTKITSPSSYNK) show a composition bias toward polar residues. Over residues 179–201 (SSSSTSATTTAANKKGKKNASIN) the composition is skewed to low complexity. Ser255 bears the Phosphoserine mark. The segment covering 448–457 (NSMNMSSRSM) has biased composition (low complexity). The segment at 448 to 468 (NSMNMSSRSMTPFSAGNTSSQ) is disordered. Residues 458-468 (TPFSAGNTSSQ) show a composition bias toward polar residues. ANK repeat units follow at residues 520–549 (QGHT…NALQ) and 641–670 (IGNT…STDI). Ser806 carries the post-translational modification Phosphoserine. Disordered regions lie at residues 813–855 (RSQS…SSLL) and 973–1017 (QDEE…DAKF). The span at 818–837 (SDEKEKAKDNENQVEKKKDP) shows a compositional bias: basic and acidic residues. Residues 846–855 (PSLESPSSLL) show a composition bias toward low complexity. A compositionally biased stretch (polar residues) spans 1000–1010 (KSTSETSSPKN).

In terms of assembly, component of the transcription complex SCB-binding factor (SBF) composed of SWI6 and SWI4. Interacts with MSA2.

Part of a complex involved in cell-cycle-dependent transcription. SWI4 and SWI6 are required for formation of the cell-cycle box factor-DNA complex. The repeated element in the upstream region of HO (5'-CACGAAAA-3') is called the cell cycle box (CCB). The chain is Regulatory protein SWI4 (SWI4) from Saccharomyces cerevisiae (strain ATCC 204508 / S288c) (Baker's yeast).